We begin with the raw amino-acid sequence, 229 residues long: NAD(P)H-hydrate epimerase (229 aa).

The 208-residue stretch at 10-217 (AINVDLELFN…ALQRKYELNL (208 aa)) folds into the YjeF N-terminal domain. 60–64 (NNGGD) is a binding site for (6S)-NADPHX. K(+) contacts are provided by N61 and D125. (6S)-NADPHX-binding positions include 129-135 (GFSFKPP) and D158. A K(+)-binding site is contributed by S161.

The protein belongs to the NnrE/AIBP family. It depends on K(+) as a cofactor.

The catalysed reaction is (6R)-NADHX = (6S)-NADHX. The enzyme catalyses (6R)-NADPHX = (6S)-NADPHX. Functionally, catalyzes the epimerization of the S- and R-forms of NAD(P)HX, a damaged form of NAD(P)H that is a result of enzymatic or heat-dependent hydration. This is a prerequisite for the S-specific NAD(P)H-hydrate dehydratase to allow the repair of both epimers of NAD(P)HX. The protein is NAD(P)H-hydrate epimerase of Drosophila virilis (Fruit fly).